The primary structure comprises 392 residues: Sulfate adenylyltransferase (392 aa).

Belongs to the sulfate adenylyltransferase family.

The catalysed reaction is sulfate + ATP + H(+) = adenosine 5'-phosphosulfate + diphosphate. The protein operates within sulfur metabolism; hydrogen sulfide biosynthesis; sulfite from sulfate: step 1/3. The protein is Sulfate adenylyltransferase of Trichormus variabilis (strain ATCC 29413 / PCC 7937) (Anabaena variabilis).